Reading from the N-terminus, the 1017-residue chain is Probable isoleucine--tRNA ligase, cytoplasmic (1017 aa).

The short motif at 45-55 is the 'HIGH' region element; it reads PFATGLPHYGH. Positions 609–613 match the 'KMSKS' region motif; it reads KMSKR. Lys-612 provides a ligand contact to ATP.

The protein belongs to the class-I aminoacyl-tRNA synthetase family.

Its subcellular location is the cytoplasm. It carries out the reaction tRNA(Ile) + L-isoleucine + ATP = L-isoleucyl-tRNA(Ile) + AMP + diphosphate. This Encephalitozoon cuniculi (strain GB-M1) (Microsporidian parasite) protein is Probable isoleucine--tRNA ligase, cytoplasmic.